Here is a 129-residue protein sequence, read N- to C-terminus: Capsid protein (129 aa).

Positions 31–104 are viral RNA-binding; the sequence is EWISSNSRSQ…FATNSDCELI (74 aa).

The protein belongs to the Leviviricetes capsid protein family. Homodimer. The capsid proteins form dimers that assemble by group of 5. Twelve such pentamers are linked together with free dimers. The homodimers binds to the viral RNA via an operator hairpin, but also to many other RNA sequences in the viral genome; this interaction probably shifts the virus from the replicative to the assembly phase and ensures specific encapsidation of the viral genome.

Its subcellular location is the virion. Its function is as follows. Capsid protein self-assembles to form an icosahedral capsid with a T=3 symmetry, about 26 nm in diameter, and consisting of 89 capsid proteins dimers (178 capsid proteins). Involved in viral genome encapsidation through the interaction between a capsid protein dimer and the multiple packaging signals present in the RNA genome. The capsid also contains 1 copy of the A2 maturation protein. Acts as a translational repressor of viral replicase synthesis late in infection. This latter function is the result of capsid protein interaction with an RNA hairpin which contains the replicase ribosome-binding site. This chain is Capsid protein, found in Escherichia coli (Bacteriophage R17).